The following is a 216-amino-acid chain: Phosphatidylserine decarboxylase proenzyme (216 aa).

Ser-182 acts as the Schiff-base intermediate with substrate; via pyruvic acid in catalysis. Position 182 is a pyruvic acid (Ser); by autocatalysis (Ser-182).

The protein belongs to the phosphatidylserine decarboxylase family. PSD-A subfamily. In terms of assembly, heterodimer of a large membrane-associated beta subunit and a small pyruvoyl-containing alpha subunit. Pyruvate is required as a cofactor. In terms of processing, is synthesized initially as an inactive proenzyme. Formation of the active enzyme involves a self-maturation process in which the active site pyruvoyl group is generated from an internal serine residue via an autocatalytic post-translational modification. Two non-identical subunits are generated from the proenzyme in this reaction, and the pyruvate is formed at the N-terminus of the alpha chain, which is derived from the carboxyl end of the proenzyme. The post-translation cleavage follows an unusual pathway, termed non-hydrolytic serinolysis, in which the side chain hydroxyl group of the serine supplies its oxygen atom to form the C-terminus of the beta chain, while the remainder of the serine residue undergoes an oxidative deamination to produce ammonia and the pyruvoyl prosthetic group on the alpha chain.

Its subcellular location is the cell membrane. It catalyses the reaction a 1,2-diacyl-sn-glycero-3-phospho-L-serine + H(+) = a 1,2-diacyl-sn-glycero-3-phosphoethanolamine + CO2. The protein operates within phospholipid metabolism; phosphatidylethanolamine biosynthesis; phosphatidylethanolamine from CDP-diacylglycerol: step 2/2. Catalyzes the formation of phosphatidylethanolamine (PtdEtn) from phosphatidylserine (PtdSer). In Burkholderia pseudomallei (strain 1106a), this protein is Phosphatidylserine decarboxylase proenzyme.